Here is a 258-residue protein sequence, read N- to C-terminus: Methionine aminopeptidase (258 aa).

His-84 is a binding site for substrate. Residues Asp-102, Asp-113, and His-176 each contribute to the a divalent metal cation site. His-183 contacts substrate. Residues Glu-211 and Glu-242 each contribute to the a divalent metal cation site.

It belongs to the peptidase M24A family. Methionine aminopeptidase type 1 subfamily. Monomer. The cofactor is Co(2+). Requires Zn(2+) as cofactor. Mn(2+) is required as a cofactor. It depends on Fe(2+) as a cofactor.

The enzyme catalyses Release of N-terminal amino acids, preferentially methionine, from peptides and arylamides.. Removes the N-terminal methionine from nascent proteins. The N-terminal methionine is often cleaved when the second residue in the primary sequence is small and uncharged (Met-Ala-, Cys, Gly, Pro, Ser, Thr, or Val). Requires deformylation of the N(alpha)-formylated initiator methionine before it can be hydrolyzed. This chain is Methionine aminopeptidase, found in Aquifex aeolicus (strain VF5).